Consider the following 342-residue polypeptide: Thioredoxin reductase 2, mitochondrial (342 aa).

A mitochondrion-targeting transit peptide spans M1–R23. Residues S34–A37, E56–Q68, I63–A64, Q68, N77, V110, C168, D311, D311–A320, and R318–A320 contribute to the FAD site. A disulfide bridge connects residues C165 and C168.

The protein belongs to the class-II pyridine nucleotide-disulfide oxidoreductase family. As to quaternary structure, homodimer. It depends on FAD as a cofactor.

It localises to the mitochondrion. The enzyme catalyses [thioredoxin]-dithiol + NADP(+) = [thioredoxin]-disulfide + NADPH + H(+). Functionally, acts on mitochondrial thioredoxin 3. Implicated in the defense against oxidative stress. The chain is Thioredoxin reductase 2, mitochondrial from Saccharomyces cerevisiae (strain ATCC 204508 / S288c) (Baker's yeast).